The chain runs to 394 residues: GTPase Obg (394 aa).

Residues 5-163 (SNFVDYVKIY…RMVIMQLKML (159 aa)) form the Obg domain. Residues 26–45 (HFRREKYIPKGGPDGGDGGR) form a disordered region. An OBG-type G domain is found at 164–330 (ADVGLVGFPN…LKDTLWKELS (167 aa)). Residues 170-177 (GFPNAGKS), 195-199 (FTTLE), 217-220 (DIPG), 284-287 (TKCD), and 311-313 (SAV) contribute to the GTP site. Mg(2+)-binding residues include Ser-177 and Thr-197.

Belongs to the TRAFAC class OBG-HflX-like GTPase superfamily. OBG GTPase family. Monomer. The cofactor is Mg(2+).

The protein localises to the cytoplasm. An essential GTPase which binds GTP, GDP and possibly (p)ppGpp with moderate affinity, with high nucleotide exchange rates and a fairly low GTP hydrolysis rate. Plays a role in control of the cell cycle, stress response, ribosome biogenesis and in those bacteria that undergo differentiation, in morphogenesis control. The polypeptide is GTPase Obg (Porphyromonas gingivalis (strain ATCC 33277 / DSM 20709 / CIP 103683 / JCM 12257 / NCTC 11834 / 2561)).